An 85-amino-acid chain; its full sequence is Cell division topological specificity factor (85 aa).

This sequence belongs to the MinE family.

Prevents the cell division inhibition by proteins MinC and MinD at internal division sites while permitting inhibition at polar sites. This ensures cell division at the proper site by restricting the formation of a division septum at the midpoint of the long axis of the cell. The chain is Cell division topological specificity factor from Cellvibrio japonicus (strain Ueda107) (Pseudomonas fluorescens subsp. cellulosa).